We begin with the raw amino-acid sequence, 60 residues long: Large ribosomal subunit protein bL32 (60 aa).

It belongs to the bacterial ribosomal protein bL32 family.

In Streptococcus gordonii (strain Challis / ATCC 35105 / BCRC 15272 / CH1 / DL1 / V288), this protein is Large ribosomal subunit protein bL32.